The sequence spans 467 residues: Na(+)-translocating NADH-quinone reductase subunit A (467 aa).

It belongs to the NqrA family. In terms of assembly, composed of six subunits; NqrA, NqrB, NqrC, NqrD, NqrE and NqrF.

It catalyses the reaction a ubiquinone + n Na(+)(in) + NADH + H(+) = a ubiquinol + n Na(+)(out) + NAD(+). Its function is as follows. NQR complex catalyzes the reduction of ubiquinone-1 to ubiquinol by two successive reactions, coupled with the transport of Na(+) ions from the cytoplasm to the periplasm. NqrA to NqrE are probably involved in the second step, the conversion of ubisemiquinone to ubiquinol. In Chlamydia pneumoniae (Chlamydophila pneumoniae), this protein is Na(+)-translocating NADH-quinone reductase subunit A.